The primary structure comprises 166 residues: Mitochondrial translation release factor in rescue (166 aa).

The transit peptide at 1–35 directs the protein to the mitochondrion; it reads MSTVGLFHFPTPLTRICPAPWGLRLWEKLTLLSPG. Residues 57-121 form a GGQ domain region; the sequence is ENELEEQFVK…LQEKVDVFYN (65 aa). The GGQ motif lies at 71 to 73; that stretch reads GGQ. Gln-73 bears the N5-methylglutamine mark. A disordered region spans residues 122 to 148; the sequence is GENSPVHKEKREAAKKKQERKKRAKET. Residues 126–137 show a composition bias toward basic and acidic residues; that stretch reads PVHKEKREAAKK. Residues 127-160 are a coiled coil; sequence VHKEKREAAKKKQERKKRAKETLEKKKLLKELWE.

Belongs to the prokaryotic/mitochondrial release factor family. In terms of assembly, interacts (via C-terminus) with MTRES1 (via S4 domain). Associates with mitoribosomal S39 large subunit, peptidyl tRNA and nascent chain. Methylation of glutamine in the GGQ triplet by HEMK1. As to expression, expressed in all areas of the brain tested.

It is found in the mitochondrion. In terms of biological role, part of a mitoribosome-associated quality control pathway that prevents aberrant translation by responding to interruptions during elongation. As heterodimer with MTRES1, ejects the unfinished nascent chain and peptidyl transfer RNA (tRNA), respectively, from stalled ribosomes. Recruitment of mitoribosome biogenesis factors to these quality control intermediates suggests additional roles for MTRES1 and MTRF during mitoribosome rescue. The polypeptide is Mitochondrial translation release factor in rescue (Homo sapiens (Human)).